The sequence spans 876 residues: Leucine--tRNA ligase (876 aa).

The short motif at 43–53 (PYPSGRIHMGH) is the 'HIGH' region element. The 'KMSKS' region motif lies at 632–636 (KMSKS). ATP is bound at residue K635.

This sequence belongs to the class-I aminoacyl-tRNA synthetase family.

It is found in the cytoplasm. It catalyses the reaction tRNA(Leu) + L-leucine + ATP = L-leucyl-tRNA(Leu) + AMP + diphosphate. The chain is Leucine--tRNA ligase from Rhodopseudomonas palustris (strain ATCC BAA-98 / CGA009).